A 1361-amino-acid chain; its full sequence is Zinc finger protein GLI4 (1361 aa).

The tract at residues 185-270 is disordered; the sequence is SSFGHTPLLH…PQPPDHLTDL (86 aa). Polar residues-rich tracts occupy residues 198–208 and 227–241; these read TFASRQQGALT and NKVS…TVNQ. C2H2-type zinc fingers lie at residues 289–314, 322–349, 355–379, 385–410, and 416–441; these read TNCH…NNDH, FVCR…MRRH, HKCT…LRSH, YVCD…NRTH, and YICK…KTVH. Disordered regions lie at residues 434–527, 556–584, 647–720, 787–832, 906–946, and 1134–1230; these read RKHV…TNNI, STVS…GTAE, NERR…LPNL, NAGL…SMNS, QNRE…APGA, and DGLH…PKDN. The segment covering 475-502 has biased composition (basic and acidic residues); the sequence is SGREHSDSVSRDQEHCLQTRTIKTEDNM. Low complexity predominate over residues 506-522; that stretch reads SSPGGQSSCSSEPSPYG. Residues 573-584 show a composition bias toward basic and acidic residues; that stretch reads QRIHSAETGTAE. Low complexity predominate over residues 653–670; the sequence is TSSTLSSAYTSRRSSGIS. Polar residues-rich tracts occupy residues 672-695 and 710-720; these read YFSS…SSAD and EASQHSGLPNL. Positions 805–821 are enriched in basic and acidic residues; the sequence is RASDPVRRTAGIDDKPL. 2 stretches are compositionally biased toward polar residues: residues 913–939 and 1142–1164; these read QNLQ…NTPE and YTVQ…SGQA. Pro residues predominate over residues 1172–1183; that stretch reads PRPPAAPHPPNR.

This sequence belongs to the GLI C2H2-type zinc-finger protein family.

It localises to the nucleus. Functionally, has an essential role in the early embryonic patterning of mesoderm and neuroectoderm. The chain is Zinc finger protein GLI4 (gli4) from Xenopus laevis (African clawed frog).